A 180-amino-acid chain; its full sequence is D-lyxose ketol-isomerase (180 aa).

Lys-62 serves as a coordination point for D-fructose. Mn(2+)-binding residues include His-75 and His-77. Lys-86 is a D-fructose binding site. Mn(2+) contacts are provided by Glu-88 and His-143. D-fructose contacts are provided by Glu-156, Asp-166, and Arg-175.

It belongs to the D-lyxose ketol-isomerase family. As to quaternary structure, homodimer; disulfide-linked. Stabilized by a disulfide bond between the two monomers of the dimeric enzyme and increased hydrophobicity at the dimer interface. It depends on Mn(2+) as a cofactor.

It catalyses the reaction D-lyxose = D-xylulose. Functionally, sugar isomerase that catalyzes the reversible isomerization of D-lyxose to D-xylulose. Is highly specific for the substrate D-lyxose, showing less than 2% activity towards mannose and other substrates reported for lyxose isomerases. In Thermofilum sp. (strain ex4484_79), this protein is D-lyxose ketol-isomerase.